The primary structure comprises 51 residues: Suberization-associated anionic peroxidase 1 (51 aa).

Position 30 (histidine 30) interacts with heme. Residue threonine 31 participates in Ca(2+) binding.

The protein belongs to the peroxidase family. Classical plant (class III) peroxidase subfamily. Requires heme b as cofactor. Ca(2+) is required as a cofactor.

It is found in the secreted. It catalyses the reaction 2 a phenolic donor + H2O2 = 2 a phenolic radical donor + 2 H2O. In terms of biological role, removal of H(2)O(2), oxidation of toxic reductants, biosynthesis and degradation of lignin, suberization, auxin catabolism, response to environmental stresses such as wounding, pathogen attack and oxidative stress. These functions might be dependent on each isozyme/isoform in each plant tissue. Suggested to catalyze the deposition of the aromatic residues of suberin on the cell wall and thus play a role in cell-suberization. The polypeptide is Suberization-associated anionic peroxidase 1 (Capsicum annuum (Capsicum pepper)).